Consider the following 103-residue polypeptide: Large ribosomal subunit protein bL21 (103 aa).

Belongs to the bacterial ribosomal protein bL21 family. Part of the 50S ribosomal subunit. Contacts protein L20.

This protein binds to 23S rRNA in the presence of protein L20. This chain is Large ribosomal subunit protein bL21, found in Bordetella avium (strain 197N).